The sequence spans 261 residues: Putative hydro-lyase SSP0308 (261 aa).

The protein belongs to the D-glutamate cyclase family.

The protein is Putative hydro-lyase SSP0308 of Staphylococcus saprophyticus subsp. saprophyticus (strain ATCC 15305 / DSM 20229 / NCIMB 8711 / NCTC 7292 / S-41).